A 352-amino-acid chain; its full sequence is Anthranilate phosphoribosyltransferase (352 aa).

5-phospho-alpha-D-ribose 1-diphosphate-binding positions include Gly-83, 86–87 (GD), Thr-91, 93–96 (NIST), 111–119 (KHGGRSVSS), and Ala-123. Gly-83 is an anthranilate binding site. Residue Ser-95 participates in Mg(2+) binding. Residue Arg-169 coordinates anthranilate. 2 residues coordinate Mg(2+): Asp-228 and Glu-229.

Belongs to the anthranilate phosphoribosyltransferase family. Homodimer. Requires Mg(2+) as cofactor.

The catalysed reaction is N-(5-phospho-beta-D-ribosyl)anthranilate + diphosphate = 5-phospho-alpha-D-ribose 1-diphosphate + anthranilate. It functions in the pathway amino-acid biosynthesis; L-tryptophan biosynthesis; L-tryptophan from chorismate: step 2/5. In terms of biological role, catalyzes the transfer of the phosphoribosyl group of 5-phosphorylribose-1-pyrophosphate (PRPP) to anthranilate to yield N-(5'-phosphoribosyl)-anthranilate (PRA). This Neisseria meningitidis serogroup A / serotype 4A (strain DSM 15465 / Z2491) protein is Anthranilate phosphoribosyltransferase.